We begin with the raw amino-acid sequence, 259 residues long: Global transcriptional regulator CodY (259 aa).

The tract at residues Met1–Leu155 is GAF domain. A DNA-binding region (H-T-H motif) is located at residues Ala203–Arg222.

Belongs to the CodY family.

The protein localises to the cytoplasm. In terms of biological role, DNA-binding global transcriptional regulator which is involved in the adaptive response to starvation and acts by directly or indirectly controlling the expression of numerous genes in response to nutrient availability. During rapid exponential growth, CodY is highly active and represses genes whose products allow adaptation to nutrient depletion. The protein is Global transcriptional regulator CodY of Exiguobacterium sibiricum (strain DSM 17290 / CCUG 55495 / CIP 109462 / JCM 13490 / 255-15).